The chain runs to 572 residues: 3-ketosteroid oxygenase (572 aa).

2 helical membrane-spanning segments follow: residues 52 to 72 (AFAL…RNFL) and 84 to 104 (YFMR…FIRI).

The protein belongs to the cytochrome P450 family. Expressed in the 2 embryonic head hypodermal cells XXXL/R.

It localises to the membrane. The catalysed reaction is 5alpha-cholest-7-en-3-one + 3 reduced [NADPH--hemoprotein reductase] + 3 O2 = (25S)-Delta7-dafachronate + 3 oxidized [NADPH--hemoprotein reductase] + 4 H2O + 4 H(+). It carries out the reaction cholest-4-en-3-one + 3 reduced [NADPH--hemoprotein reductase] + 3 O2 = (25S)-3-oxocholest-4-en-26-oate + 3 oxidized [NADPH--hemoprotein reductase] + 4 H2O + 4 H(+). It functions in the pathway steroid hormone biosynthesis; dafachronic acid biosynthesis. Functionally, converts the 3-keto steroids 4-cholesten-3-one and lathosterone into the carboxylic metabolites 3-keto-4-cholestenate (Delta(4)-dafachronic acid, Delta(4)-DA) and 3-keto-7,(5a)-cholestenate (Delta(7)-dafachronic acid, Delta(7)-DA) respectively, by catalyzing successive oxidations at C-26. Dafachronic acids bind directly to the nuclear hormone receptor (NHR) DAF-12, suppressing dauer formation and inducing reproductive growth. In a non-cell autonomous manner, negatively regulates body wall muscle arm extensions to motor neurons probably by preventing daf-12 isoform b activation. May be involved in thermotolerance. The polypeptide is 3-ketosteroid oxygenase (daf-9) (Caenorhabditis elegans).